The chain runs to 637 residues: Sodium-dependent proline transporter (637 aa).

Topologically, residues M1 to D45 are cytoplasmic. T20 is subject to Phosphothreonine. A Phosphoserine modification is found at S22. 3 consecutive transmembrane segments (helical) span residues F46–R66, A74–L93, and G117–I137. The Extracellular segment spans residues A138–R214. Residue N182 is glycosylated (N-linked (GlcNAc...) asparagine). 9 helical membrane-spanning segments follow: residues W215 to L233, V242 to V259, I295 to Y312, F324 to L345, L378 to L397, V425 to T443, S459 to I479, A500 to V519, and L538 to V556. Residues A557 to M637 are Cytoplasmic-facing. 2 positions are modified to phosphoserine: S573 and S582. The residue at position 588 (T588) is a Phosphothreonine. Y591 is subject to Phosphotyrosine. A phosphoserine mark is found at S598 and S600.

The protein belongs to the sodium:neurotransmitter symporter (SNF) (TC 2.A.22) family. SLC6A7 subfamily. Expressed in subpopulations of putative glutamatergic pathways of rat brain.

Its subcellular location is the synaptic cell membrane. It catalyses the reaction L-proline(out) + chloride(out) + 2 Na(+)(out) = L-proline(in) + chloride(in) + 2 Na(+)(in). The enzyme catalyses L-pipecolate(out) + chloride(out) + 2 Na(+)(out) = L-pipecolate(in) + chloride(in) + 2 Na(+)(in). Functionally, brain specific sodium (and chloride)-dependent proline transporter. Terminates the action of proline by its high affinity sodium-dependent reuptake into presynaptic terminals. This Rattus norvegicus (Rat) protein is Sodium-dependent proline transporter (Slc6a7).